Reading from the N-terminus, the 528-residue chain is Atypical kinase COQ8B, mitochondrial (528 aa).

The chain crosses the membrane as a helical span at residues 93–109 (LASFGGLAVGLGLGALA). The KxGQ motif motif lies at 151 to 154 (KIGQ). In terms of domain architecture, Protein kinase spans 187 to 419 (MMKVLEEELG…DRVLQKSQDL (233 aa)). The AAAS motif motif lies at 212-215 (AAAS). ATP contacts are provided by residues serine 215, lysine 233, and 320–323 (MELA). Residue aspartate 363 is the Proton acceptor of the active site. ATP-binding residues include asparagine 368 and aspartate 382.

Belongs to the protein kinase superfamily. ADCK protein kinase family. Homodimer; homodimerizes via its transmembrane region. Interacts with COQ6 and COQ7. Interacts with the multi-subunit COQ enzyme complex, composed of at least COQ3, COQ4, COQ5, COQ6, COQ7 and COQ9. As to expression, in the kidney, expressed in glomeruli, predominantly in podocyte foot precesses, as well as in proximal tubules and collecting ducts (at protein level).

The protein localises to the mitochondrion membrane. Its subcellular location is the cytoplasm. It localises to the cytosol. The protein resides in the cell membrane. Its pathway is cofactor biosynthesis; ubiquinone biosynthesis. Atypical kinase involved in the biosynthesis of coenzyme Q, also named ubiquinone, an essential lipid-soluble electron transporter for aerobic cellular respiration. Its substrate specificity is still unclear: may act as a protein kinase that mediates phosphorylation of COQ3. According to other reports, acts as a small molecule kinase, possibly a lipid kinase that phosphorylates a prenyl lipid in the ubiquinone biosynthesis pathway, as suggested by its ability to bind coenzyme Q lipid intermediates. However, the small molecule kinase activity was not confirmed by another publication. Required for podocyte migration. This Rattus norvegicus (Rat) protein is Atypical kinase COQ8B, mitochondrial.